The chain runs to 165 residues: Probable velvet family sexual development regulator CC1G_12219 (165 aa).

The Velvet domain maps to 1 to 121 (MSNTDAQTSF…SVWGAQVNVR (121 aa)).

It belongs to the velvet family.

It is found in the nucleus. Velvet-domain-containing protein that probably acts as a positive regulator of sexual development. The polypeptide is Probable velvet family sexual development regulator CC1G_12219 (Coprinopsis cinerea (strain Okayama-7 / 130 / ATCC MYA-4618 / FGSC 9003) (Inky cap fungus)).